Reading from the N-terminus, the 444-residue chain is Phosphoglucosamine mutase (444 aa).

Catalysis depends on Ser-100, which acts as the Phosphoserine intermediate. 4 residues coordinate Mg(2+): Ser-100, Asp-234, Asp-236, and Asp-238. Ser-100 is modified (phosphoserine).

Belongs to the phosphohexose mutase family. Requires Mg(2+) as cofactor. Activated by phosphorylation.

The catalysed reaction is alpha-D-glucosamine 1-phosphate = D-glucosamine 6-phosphate. Its function is as follows. Catalyzes the conversion of glucosamine-6-phosphate to glucosamine-1-phosphate. This chain is Phosphoglucosamine mutase, found in Rubrobacter xylanophilus (strain DSM 9941 / JCM 11954 / NBRC 16129 / PRD-1).